A 564-amino-acid chain; its full sequence is Multidrug resistance protein 1 (564 aa).

The Cytoplasmic portion of the chain corresponds to 1–115 (MHYRFLRDSF…NPQNWPTLQK (115 aa)). The interval 60-101 (IDNQGEPNSSQSSSSNNTIVDNNNNNDNDVDGDKIVVTWDGD) is disordered. Positions 67–86 (NSSQSSSSNNTIVDNNNNND) are enriched in low complexity. A helical transmembrane segment spans residues 116-136 (AFFIFQISFLTTSVYMGSAVY). Residues 137–151 (TPGIEELMHDFGIGR) are Extracellular-facing. A helical transmembrane segment spans residues 152–172 (VVATLPLTLFVIGYGVGPLVF). Over 173-183 (SPMSENAIFGR) the chain is Cytoplasmic. The chain crosses the membrane as a helical span at residues 184-204 (TSIYIITLFLFVILQIPTALV). Residues 205 to 206 (NN) lie on the Extracellular side of the membrane. Residues 207–227 (IAGLCILRFLGGFFASPCLAT) traverse the membrane as a helical segment. Topologically, residues 228 to 242 (GGASVADVVKFWNLP) are cytoplasmic. The helical transmembrane segment at 243–263 (VGLAAWSLGAVCGPSFGPFFG) threads the bilayer. The Extracellular portion of the chain corresponds to 264-273 (SILTVKASWR). The chain crosses the membrane as a helical span at residues 274-294 (WTFWFMCIISGFSFVMLCFTL). The Cytoplasmic portion of the chain corresponds to 295–350 (PETFGKTLLYRKAKRLRAITGNDRITSEGEVENSKMTSHELIIDTLWRPLEITVME). The helical transmembrane segment at 351 to 371 (PVVLLINIYIAMVYSILYLFF) threads the bilayer. Topologically, residues 372-390 (EVFPIYFVGVKHFTLVELG) are extracellular. The helical transmembrane segment at 391 to 411 (TTYMSIVIGIVIAAFIYIPVI) threads the bilayer. The Cytoplasmic segment spans residues 412–428 (RQKFTKPILRQEQVFPE). A helical transmembrane segment spans residues 429-449 (VFIPIAIVGGILLTSGLFIFG). At 450-455 (WSANRT) the chain is on the extracellular side. N-linked (GlcNAc...) asparagine glycosylation is present at asparagine 453. The helical transmembrane segment at 456 to 476 (THWVGPLFGAATTASGAFLIF) threads the bilayer. Residues 477–503 (QTLFNFMGASFKPHYIASVFASNDLFR) lie on the Cytoplasmic side of the membrane. The chain crosses the membrane as a helical span at residues 504–524 (SVIASVFPLFGAPLFDNLATP). The Extracellular portion of the chain corresponds to 525–528 (EYPV). The helical transmembrane segment at 529-549 (AWGSSVLGFITLVMIAIPVLF) threads the bilayer. The Cytoplasmic segment spans residues 550–564 (YLNGPKLRARSKYAN).

Belongs to the major facilitator superfamily. CAR1 family.

The protein localises to the cell membrane. In terms of biological role, plasma membrane multidrug efflux pump that confers resistance to numerous chemicals including azoles such as fluconazole, voriconazole, and benztriazoles, as well as to benomyl, cycloheximide, methotrexate, 4-nitroquinoline-N-oxide, sulfometuron methyl, cerulenin, and brefeldin A. The protein is Multidrug resistance protein 1 of Candida albicans (strain SC5314 / ATCC MYA-2876) (Yeast).